The following is a 379-amino-acid chain: Elongation factor Ts, mitochondrial (379 aa).

The transit peptide at M1 to T33 directs the protein to the mitochondrion.

This sequence belongs to the EF-Ts family.

The protein resides in the mitochondrion. Associates with the EF-Tu.GDP complex and induces the exchange of GDP to GTP. It remains bound to the aminoacyl-tRNA.EF-Tu.GTP complex up to the GTP hydrolysis stage on the ribosome. The polypeptide is Elongation factor Ts, mitochondrial (Zea mays (Maize)).